A 341-amino-acid chain; its full sequence is Ribosomal RNA small subunit methyltransferase H (341 aa).

Residues 47-49 (GGY), Asp64, Phe91, Asp109, and Gln116 contribute to the S-adenosyl-L-methionine site.

It belongs to the methyltransferase superfamily. RsmH family.

It is found in the cytoplasm. The enzyme catalyses cytidine(1402) in 16S rRNA + S-adenosyl-L-methionine = N(4)-methylcytidine(1402) in 16S rRNA + S-adenosyl-L-homocysteine + H(+). Its function is as follows. Specifically methylates the N4 position of cytidine in position 1402 (C1402) of 16S rRNA. In Agrobacterium fabrum (strain C58 / ATCC 33970) (Agrobacterium tumefaciens (strain C58)), this protein is Ribosomal RNA small subunit methyltransferase H.